Reading from the N-terminus, the 327-residue chain is Serum response factor homolog (327 aa).

Positions Gln-12 to Lys-43 are disordered. The segment covering Thr-25–Thr-35 has biased composition (low complexity). The 61-residue stretch at Lys-45–Lys-105 folds into the MADS-box domain. The tract at residues Thr-189–Lys-225 is disordered. Over residues Gly-191 to Ser-210 the composition is skewed to acidic residues.

In terms of tissue distribution, expressed in muscle, varying with age, decreasing twofold during the first week of adulthood.

The protein resides in the nucleus. Transcription factor. Regulates myogenesis, in cooperation with transcription factors hlh-1 and hnd-1. Required for maintenance of muscle in adulthood. The polypeptide is Serum response factor homolog (Caenorhabditis elegans).